Here is a 146-residue protein sequence, read N- to C-terminus: Large-conductance mechanosensitive channel (146 aa).

Helical transmembrane passes span 12–32 (AFAM…GGAF) and 83–103 (GNFL…FLFI).

The protein belongs to the MscL family. As to quaternary structure, homopentamer.

The protein localises to the cell inner membrane. In terms of biological role, channel that opens in response to stretch forces in the membrane lipid bilayer. May participate in the regulation of osmotic pressure changes within the cell. The sequence is that of Large-conductance mechanosensitive channel from Phocaeicola vulgatus (strain ATCC 8482 / DSM 1447 / JCM 5826 / CCUG 4940 / NBRC 14291 / NCTC 11154) (Bacteroides vulgatus).